Here is a 1880-residue protein sequence, read N- to C-terminus: Nonribosomal peptide synthetase otaB (1880 aa).

The tract at residues 205 to 594 (AQAVERGNSI…SVSFVGRRQA (390 aa)) is adenylation 1. The 77-residue stretch at 728 to 804 (LPLSPLERQI…ELGAHLEQEA (77 aa)) folds into the Carrier domain. Ser765 carries the post-translational modification O-(pantetheine 4'-phosphoryl)serine. The condensation stretch occupies residues 840–1250 (EDVYPCTALQ…LLSPQDQQQL (411 aa)). Residues 1269-1665 (QRQCLAHPQK…GRKDRQVKLR (397 aa)) form an adenylation 2 region.

Belongs to the NRP synthetase family.

The catalysed reaction is 7-carboxymellein + L-phenylalanine + ATP = ochratoxin B + ADP + phosphate + H(+). Its pathway is mycotoxin biosynthesis. Functionally, nonribosomal peptide synthetase; part of the gene cluster that mediates the biosynthesis of ochratoxin A (OTA), a mycotoxin composed of a chlorinated type I polyketide dihydroisocoumarin moiety linked to L-phenylalanine, and demonstrated to have nephrotoxic, immunotoxic, genotoxic, neurotoxic, and teratogenic properties. OtaB is responsible for the linking of phenylalanine to the dihydroisocoumarin ring. The pathway begins with the highly reducing polyketide synthase otaA that catalyzes the formation of the isocoumarin group during the initial stages of biosynthesis, starting from one acetate and 4 malonate units, to originate the characteristic pentaketide skeleton 7-methylmellein (7-MM) of the OTA molecule. The newly identified cyclase otaY might be involved in the polyketide cyclization reaction during the initial steps of the OTA biosynthesis. 7-MM is then oxidized into 7-carboxymellein (also called ochratoxin beta) by the cytochrome P450 monooxygenase otaC. The NRPS encoded by the otaB gene is involved in the linking of phenylalanine to the dihydroisocoumarin ring. The reaction catalyzed by NRPS results in the production of ochratoxin B (OTB), which is the non-chlorinated analog of OTA and which subsequently serves as the substrate of the halogenase otaD for chlorination activity to form the final molecular structure of OTA, containing a chlorine atom in the C-5 position of the molecule. This Aspergillus niger (strain ATCC MYA-4892 / CBS 513.88 / FGSC A1513) protein is Nonribosomal peptide synthetase otaB.